The following is a 255-amino-acid chain: Hydroxyacylglutathione hydrolase (255 aa).

His56, His58, Asp60, His61, His114, Asp133, and His171 together coordinate Zn(2+).

This sequence belongs to the metallo-beta-lactamase superfamily. Glyoxalase II family. As to quaternary structure, monomer. Zn(2+) is required as a cofactor.

The catalysed reaction is an S-(2-hydroxyacyl)glutathione + H2O = a 2-hydroxy carboxylate + glutathione + H(+). Its pathway is secondary metabolite metabolism; methylglyoxal degradation; (R)-lactate from methylglyoxal: step 2/2. Functionally, thiolesterase that catalyzes the hydrolysis of S-D-lactoyl-glutathione to form glutathione and D-lactic acid. The chain is Hydroxyacylglutathione hydrolase from Nitrobacter hamburgensis (strain DSM 10229 / NCIMB 13809 / X14).